The sequence spans 186 residues: uncharacterized protein (186 aa).

Asparagine 34 is a glycosylation site (N-linked (GlcNAc...) asparagine; by host). 3 helical membrane-spanning segments follow: residues 47-67 (IGMV…ATTF), 114-134 (ILET…IVLL), and 144-164 (LEMI…TLFF).

Its subcellular location is the membrane. This is an uncharacterized protein from Acanthamoeba polyphaga mimivirus (APMV).